The sequence spans 308 residues: Acetyl-coenzyme A carboxylase carboxyl transferase subunit alpha (308 aa).

The CoA carboxyltransferase C-terminal domain maps to 36-286 (ELEKEVSSVY…ESYFLKAFEE (251 aa)).

Belongs to the AccA family. As to quaternary structure, acetyl-CoA carboxylase is a heterohexamer composed of biotin carboxyl carrier protein (AccB), biotin carboxylase (AccC) and two subunits each of ACCase subunit alpha (AccA) and ACCase subunit beta (AccD).

The protein resides in the cytoplasm. The catalysed reaction is N(6)-carboxybiotinyl-L-lysyl-[protein] + acetyl-CoA = N(6)-biotinyl-L-lysyl-[protein] + malonyl-CoA. The protein operates within lipid metabolism; malonyl-CoA biosynthesis; malonyl-CoA from acetyl-CoA: step 1/1. In terms of biological role, component of the acetyl coenzyme A carboxylase (ACC) complex. First, biotin carboxylase catalyzes the carboxylation of biotin on its carrier protein (BCCP) and then the CO(2) group is transferred by the carboxyltransferase to acetyl-CoA to form malonyl-CoA. The sequence is that of Acetyl-coenzyme A carboxylase carboxyl transferase subunit alpha from Helicobacter hepaticus (strain ATCC 51449 / 3B1).